A 351-amino-acid polypeptide reads, in one-letter code: Photosystem II D2 protein (351 aa).

A helical transmembrane segment spans residues threonine 39–threonine 59. Histidine 116 is a chlorophyll a binding site. Residues glycine 123–proline 139 form a helical membrane-spanning segment. Pheophytin a is bound by residues glutamine 128 and asparagine 141. The helical transmembrane segment at valine 151–histidine 164 threads the bilayer. Residue histidine 196 participates in chlorophyll a binding. A helical transmembrane segment spans residues glycine 206–alanine 226. Residues histidine 213 and phenylalanine 260 each coordinate a plastoquinone. Histidine 213 is a Fe cation binding site. Histidine 267 contributes to the Fe cation binding site. A helical membrane pass occupies residues glycine 277 to arginine 293.

It belongs to the reaction center PufL/M/PsbA/D family. As to quaternary structure, PSII is composed of 1 copy each of membrane proteins PsbA, PsbB, PsbC, PsbD, PsbE, PsbF, PsbH, PsbI, PsbJ, PsbK, PsbL, PsbM, PsbT, PsbX, PsbY, Psb30/Ycf12, peripheral proteins PsbO, CyanoQ (PsbQ), PsbU, PsbV and a large number of cofactors. It forms dimeric complexes. The D1/D2 heterodimer binds P680, chlorophylls that are the primary electron donor of PSII, and subsequent electron acceptors. It shares a non-heme iron and each subunit binds pheophytin, quinone, additional chlorophylls, carotenoids and lipids. There is also a Cl(-1) ion associated with D1 and D2, which is required for oxygen evolution. The PSII complex binds additional chlorophylls, carotenoids and specific lipids. serves as cofactor.

It localises to the cellular thylakoid membrane. It catalyses the reaction 2 a plastoquinone + 4 hnu + 2 H2O = 2 a plastoquinol + O2. Functionally, photosystem II (PSII) is a light-driven water:plastoquinone oxidoreductase that uses light energy to abstract electrons from H(2)O, generating O(2) and a proton gradient subsequently used for ATP formation. It consists of a core antenna complex that captures photons, and an electron transfer chain that converts photonic excitation into a charge separation. The D1/D2 (PsbA/PsbD) reaction center heterodimer binds P680, the primary electron donor of PSII as well as several subsequent electron acceptors. D2 is needed for assembly of a stable PSII complex. This Prochlorococcus marinus (strain MIT 9313) protein is Photosystem II D2 protein.